Reading from the N-terminus, the 488-residue chain is Transmembrane protein 39A (488 aa).

Residues N31 and N39 are each glycosylated (N-linked (GlcNAc...) asparagine). 8 helical membrane-spanning segments follow: residues 72-92, 110-130, 154-174, 182-202, 287-307, 319-339, 420-440, and 446-466; these read SLLF…IQYI, TSLN…VMLA, VLIS…CWTL, SVLN…LCCF, EVLF…LCFV, CEHL…QLLP, LLNL…YSLL, and NHTL…FKLL.

This sequence belongs to the TMEM39 family. As to quaternary structure, interacts with SACM1L, SEC23A and SEC24A. (Microbial infection) Interacts with encephalomyocarditis virus (EMCV) major capsid proteins VP1 and VP2. As to expression, up-regulated in brain tumor glioblastoma multiforme cells (at protein level).

It localises to the endoplasmic reticulum membrane. In terms of biological role, regulates autophagy by controlling the spatial distribution and levels of the intracellular phosphatidylinositol 4-phosphate (PtdIns(4)P) pools. Modulates (PtdIns(4)P) levels by regulating the ER-to-Golgi trafficking of the phosphatidylinositide phosphatase SACM1L. (Microbial infection) Positively regulates the replication of encephalomyocarditis virus (EMCV) via autophagy-dependent pathway. The sequence is that of Transmembrane protein 39A (TMEM39A) from Homo sapiens (Human).